Consider the following 609-residue polypeptide: MGKVIGIDLGTTNSCVSILEGDEPKVIQNPEGARTTPSVVAFKNGETQVGEVAKRQAITNPNTVQSIKRHMGTDYKVDIEGKSYTPQELSAMILQNLKSTAENYLGDTVDKAVITVPAYFNDGERQATKDAGKIAGLEVERIINEPTAAALAYGLDKTETDQKVLVFDLGGGTFDVSILELGDGVFEVLSTAGDNKLGGDDFDQVIIDYLVSEFKKENGVDLSQDKMALQRLKDAAEKAKKDLSGVSQTQISLPFISAGENGPLHLEISLTRSKFEELADSLIKKTMEPTRQALKDAGLSTSEIDEVILVGGSTRIPAVQEAVKKEIGKEPHKGVNPDEVVAMGAAIQAGVITGDVKDVVLLDVTPLSLGIEIMGGRMNTLIERNTTIPTSKSQVYSTAADNQPAVDIHVLQGERPMASDNKTLGRFQLTDIPPAPRGVPQIEVTFDIDKNGIVNVTAKDLGTNKEQNITIQSSSSLSDEEIDRMVKDAEENAEADKKRREEVDLRNEADSLVFQVEKTVKDLGENISDEDKKNAEEKKDALKTALEGEDIDDIKAKKEELEKVIQELSAKVYEQAQQAQQQGQEEQGSQDSTVEDADFKEVKDDEDKK.

Position 173 is a phosphothreonine; by autocatalysis (threonine 173). Basic and acidic residues predominate over residues 525–542 (ENISDEDKKNAEEKKDAL). 2 disordered regions span residues 525-554 (ENIS…IDDI) and 574-609 (EQAQ…EDKK). A compositionally biased stretch (low complexity) spans 574-587 (EQAQQAQQQGQEEQ). Residues 597 to 609 (ADFKEVKDDEDKK) show a composition bias toward basic and acidic residues.

Belongs to the heat shock protein 70 family.

Functionally, acts as a chaperone. This Staphylococcus epidermidis (strain ATCC 35984 / DSM 28319 / BCRC 17069 / CCUG 31568 / BM 3577 / RP62A) protein is Chaperone protein DnaK.